The following is a 187-amino-acid chain: Putative adenylate kinase (187 aa).

ATP-binding residues include G10, G12, K13, T14, and V15. The NMP stretch occupies residues 30-53; it reads SLSQFVIENKLYTEYDELRQSYII. The segment at 103–113 is LID; sequence GRGWADIKVAE. R104 is a binding site for ATP.

The protein belongs to the adenylate kinase family. AK6 subfamily. Interacts with uS11. Not a structural component of 40S pre-ribosomes, but transiently interacts with them by binding to uS11.

It carries out the reaction AMP + ATP = 2 ADP. The enzyme catalyses ATP + H2O = ADP + phosphate + H(+). Functionally, broad-specificity nucleoside monophosphate (NMP) kinase that catalyzes the reversible transfer of the terminal phosphate group between nucleoside triphosphates and monophosphates. Also has ATPase activity. Involved in the late maturation steps of the 30S ribosomal particles, specifically 16S rRNA maturation. While NMP activity is not required for ribosome maturation, ATPase activity is. Associates transiently with small ribosomal subunit protein uS11. ATP hydrolysis breaks the interaction with uS11. May temporarily remove uS11 from the ribosome to enable a conformational change of the ribosomal RNA that is needed for the final maturation step of the small ribosomal subunit. The polypeptide is Putative adenylate kinase (Saccharolobus islandicus (strain M.16.4 / Kamchatka #3) (Sulfolobus islandicus)).